The primary structure comprises 255 residues: BPI fold-containing family A member 1 (255 aa).

The first 19 residues, M1 to A19, serve as a signal peptide directing secretion. Positions L87–L92 are important for surfactant activity and antibacterial properties. N157, N178, and N205 each carry an N-linked (GlcNAc...) asparagine glycan. Residues C179 and C223 are joined by a disulfide bond.

This sequence belongs to the BPI/LBP/Plunc superfamily. Plunc family. As to quaternary structure, monomer. Interacts (via N-terminus) with SCNN1B, a subunit of the heterotrimeric epithelial sodium channel (ENaC); this inhibits proteolytic activation of ENaC. Expressed in trachea, and at lower levels in nasal epithelium.

The protein localises to the secreted. Functionally, lipid-binding protein which shows high specificity for the surfactant phospholipid dipalmitoylphosphatidylcholine (DPPC). Plays a role in the innate immune responses of the upper airways. Reduces the surface tension in secretions from airway epithelia and inhibits the formation of biofilm by pathogenic Gram-negative bacteria, such as P.aeruginosa and K.pneumoniae. Negatively regulates proteolytic cleavage of SCNN1G, an event that is required for activation of the epithelial sodium channel (ENaC), and thereby contributes to airway surface liquid homeostasis and proper clearance of mucus. Plays a role in the airway inflammatory response after exposure to irritants. May attract macrophages and neutrophils. This is BPI fold-containing family A member 1 (BPIFA1) from Bos taurus (Bovine).